Reading from the N-terminus, the 125-residue chain is uncharacterized protein (125 aa).

It to transposase of insertion sequence IS6501.

This is an uncharacterized protein from Sinorhizobium fredii (strain NBRC 101917 / NGR234).